A 559-amino-acid polypeptide reads, in one-letter code: NAD-dependent histone deacetylase SIR2 (559 aa).

The interval 1–73 (MSESASMLQG…NDHSAQEVAG (73 aa)) is disordered. Residues 39-51 (NDEKELLEATKAD) are compositionally biased toward basic and acidic residues. The span at 52–62 (ELDEVVDDYAE) shows a compositional bias: acidic residues. The region spanning 223-514 (RLANFFTLDH…AFIAQKCGWD (292 aa)) is the Deacetylase sirtuin-type domain. Residues 248-267 (GAGI…KGFY) and 330-333 (QNID) each bind NAD(+). Histidine 350 (proton acceptor) is an active-site residue. Residues cysteine 358, cysteine 361, cysteine 382, and cysteine 385 each coordinate Zn(2+). Residues 458–460 (GTS), 483–485 (NRD), and cysteine 500 contribute to the NAD(+) site.

It belongs to the sirtuin family. Class I subfamily. Zn(2+) serves as cofactor.

It is found in the nucleus. The enzyme catalyses N(6)-acetyl-L-lysyl-[protein] + NAD(+) + H2O = 2''-O-acetyl-ADP-D-ribose + nicotinamide + L-lysyl-[protein]. In terms of biological role, NAD-dependent deacetylase. Heterochromatin component that silences transcription at silent mating loci, telomeres and the ribosomal DNA, and that also suppresses recombination in the rDNA and extends replicative life span. It acts as a NAD-dependent histone deacetylase, which deacetylates 'Lys-9' and 'Lys-14' of Histone H3 and 'Lys-16' of Histone H4. In Eremothecium gossypii (strain ATCC 10895 / CBS 109.51 / FGSC 9923 / NRRL Y-1056) (Yeast), this protein is NAD-dependent histone deacetylase SIR2 (SIR2).